We begin with the raw amino-acid sequence, 318 residues long: Molybdenum cofactor insertion chaperone PaoD (318 aa).

In terms of assembly, homodimer in solution. Interacts with MocA.

Its function is as follows. Chaperone required for the production of an active PaoABC aldehyde oxidoreductase. Stabilizes the PaoC subunit and is required for the insertion of the molybdenum cofactor into this subunit. Binds molybdenum cofactor. Binds the molybdopterin cytosine dinucleotide (MCD) form of the cofactor after its formation by the molybdenum cofactor cytidylyltransferase MocA. The sequence is that of Molybdenum cofactor insertion chaperone PaoD from Escherichia coli (strain K12).